Consider the following 73-residue polypeptide: Toxin Td10 (73 aa).

The signal sequence occupies residues 1 to 7 (IGMVVEC). An LCN-type CS-alpha/beta domain is found at 8–70 (KDGYLMGPDG…VWERATNRCG (63 aa)). Intrachain disulfides connect Cys18/Cys69, Cys22/Cys44, Cys30/Cys50, and Cys34/Cys52. Lys71 is modified (lysine amide).

It belongs to the long (4 C-C) scorpion toxin superfamily. Sodium channel inhibitor family. Beta subfamily. In terms of tissue distribution, expressed by the venom gland.

Its subcellular location is the secreted. Its function is as follows. Beta toxins bind voltage-independently at site-4 of sodium channels (Nav) and shift the voltage of activation toward more negative potentials thereby affecting sodium channel activation and promoting spontaneous and repetitive firing. This Tityus discrepans (Venezuelan scorpion) protein is Toxin Td10.